Reading from the N-terminus, the 84-residue chain is Large ribosomal subunit protein bL27 (84 aa).

The tract at residues 1 to 21 is disordered; that stretch reads MAHKKGASSTRNGRDSNAQRL. Polar residues predominate over residues 7–19; the sequence is ASSTRNGRDSNAQ.

The protein belongs to the bacterial ribosomal protein bL27 family.

The sequence is that of Large ribosomal subunit protein bL27 from Clavibacter sepedonicus (Clavibacter michiganensis subsp. sepedonicus).